A 361-amino-acid polypeptide reads, in one-letter code: POU domain, class 3, transcription factor 4 (361 aa).

Disordered stretches follow at residues 99–131 (PHVA…GQPL) and 144–192 (MLEH…PTSD). Positions 122–131 (PSITSSGQPL) are enriched in polar residues. The span at 165-183 (VLREPPDHGELGSHHCQDH) shows a compositional bias: basic and acidic residues. The 75-residue stretch at 186–260 (EETPTSDELE…LLNKWLEEAD (75 aa)) folds into the POU-specific domain. A Phosphoserine modification is found at S265. The homeobox DNA-binding region spans 278-337 (KRKKRTSIEVSVKGVLETHFLKCPKPAAQEISSLADSLQLEKEVVRVWFCNRRQKEKRMT).

It belongs to the POU transcription factor family. Class-3 subfamily. As to quaternary structure, interacts with HNRNPU. In terms of tissue distribution, brain specific.

The protein resides in the nucleus. Functionally, probable transcription factor which exert its primary action widely during early neural development and in a very limited set of neurons in the mature brain. The chain is POU domain, class 3, transcription factor 4 (POU3F4) from Homo sapiens (Human).